The primary structure comprises 158 residues: Small ribosomal subunit protein uS9 (158 aa).

This sequence belongs to the universal ribosomal protein uS9 family.

In Nitrobacter winogradskyi (strain ATCC 25391 / DSM 10237 / CIP 104748 / NCIMB 11846 / Nb-255), this protein is Small ribosomal subunit protein uS9.